The primary structure comprises 84 residues: Protein SlyX homolog (84 aa).

This sequence belongs to the SlyX family.

In Mannheimia succiniciproducens (strain KCTC 0769BP / MBEL55E), this protein is Protein SlyX homolog.